Here is a 489-residue protein sequence, read N- to C-terminus: Probable cytosol aminopeptidase (489 aa).

Lysine 260 and aspartate 265 together coordinate Mn(2+). Lysine 272 is a catalytic residue. Mn(2+)-binding residues include aspartate 283, aspartate 342, and glutamate 344. Arginine 346 is a catalytic residue.

This sequence belongs to the peptidase M17 family. The cofactor is Mn(2+).

It localises to the cytoplasm. The catalysed reaction is Release of an N-terminal amino acid, Xaa-|-Yaa-, in which Xaa is preferably Leu, but may be other amino acids including Pro although not Arg or Lys, and Yaa may be Pro. Amino acid amides and methyl esters are also readily hydrolyzed, but rates on arylamides are exceedingly low.. It catalyses the reaction Release of an N-terminal amino acid, preferentially leucine, but not glutamic or aspartic acids.. In terms of biological role, presumably involved in the processing and regular turnover of intracellular proteins. Catalyzes the removal of unsubstituted N-terminal amino acids from various peptides. The sequence is that of Probable cytosol aminopeptidase from Alcanivorax borkumensis (strain ATCC 700651 / DSM 11573 / NCIMB 13689 / SK2).